Reading from the N-terminus, the 279-residue chain is Energy-coupling factor transporter ATP-binding protein EcfA1 (279 aa).

In terms of domain architecture, ABC transporter spans 6 to 240 (VRLEHVFYKY…ADAMREIGLG (235 aa)). 40–47 (GHNGSGKS) contacts ATP.

It belongs to the ABC transporter superfamily. Energy-coupling factor EcfA family. In terms of assembly, forms a stable energy-coupling factor (ECF) transporter complex composed of 2 membrane-embedded substrate-binding proteins (S component), 2 ATP-binding proteins (A component) and 2 transmembrane proteins (T component).

The protein resides in the cell membrane. In terms of biological role, ATP-binding (A) component of a common energy-coupling factor (ECF) ABC-transporter complex. Unlike classic ABC transporters this ECF transporter provides the energy necessary to transport a number of different substrates. This chain is Energy-coupling factor transporter ATP-binding protein EcfA1, found in Listeria monocytogenes serotype 4b (strain F2365).